A 366-amino-acid chain; its full sequence is Terpene synthase 4 (366 aa).

The DDxx(x)D/E motif signature appears at Asp-91–Arg-96. The short motif at Asn-241 to Glu-249 is the NDxxSxxxD/E motif element.

It belongs to the terpene synthase family.

The enzyme catalyses (2E,6E)-farnesyl diphosphate = (1S,2S,4R)-beta-elemene + diphosphate. Terpene synthase that converts its substrate farnesyl diphosphate (FPP) into the sesquiterpenes bicycloelemene, beta-elemene and 2 yet unidentified sesquiterpenes. The polypeptide is Terpene synthase 4 (Dictyostelium purpureum (Slime mold)).